The chain runs to 543 residues: Thermosome subunit beta (543 aa).

Positions T522 to D543 are disordered. Residues K523–D543 are compositionally biased toward low complexity.

Belongs to the TCP-1 chaperonin family. In terms of assembly, forms a Heterooligomeric complex of two stacked eight-membered rings. Post-translationally, the N-terminus is blocked.

Its function is as follows. Molecular chaperone; binds unfolded polypeptides in vitro, and has a weak ATPase activity. This is Thermosome subunit beta (thsB) from Thermoplasma acidophilum (strain ATCC 25905 / DSM 1728 / JCM 9062 / NBRC 15155 / AMRC-C165).